The sequence spans 388 residues: Formate-dependent phosphoribosylglycinamide formyltransferase (388 aa).

N(1)-(5-phospho-beta-D-ribosyl)glycinamide is bound by residues E20–L21 and E80. Residues R112, K153, S158–Q163, E193–V196, and E201 contribute to the ATP site. Residues R117–L306 enclose the ATP-grasp domain. Positions 265 and 277 each coordinate Mg(2+). N(1)-(5-phospho-beta-D-ribosyl)glycinamide-binding positions include D284, K352, and R359 to R360.

Belongs to the PurK/PurT family. In terms of assembly, homodimer.

The catalysed reaction is N(1)-(5-phospho-beta-D-ribosyl)glycinamide + formate + ATP = N(2)-formyl-N(1)-(5-phospho-beta-D-ribosyl)glycinamide + ADP + phosphate + H(+). It functions in the pathway purine metabolism; IMP biosynthesis via de novo pathway; N(2)-formyl-N(1)-(5-phospho-D-ribosyl)glycinamide from N(1)-(5-phospho-D-ribosyl)glycinamide (formate route): step 1/1. Functionally, involved in the de novo purine biosynthesis. Catalyzes the transfer of formate to 5-phospho-ribosyl-glycinamide (GAR), producing 5-phospho-ribosyl-N-formylglycinamide (FGAR). Formate is provided by PurU via hydrolysis of 10-formyl-tetrahydrofolate. This is Formate-dependent phosphoribosylglycinamide formyltransferase from Methanococcus vannielii (strain ATCC 35089 / DSM 1224 / JCM 13029 / OCM 148 / SB).